The primary structure comprises 46 residues: Large ribosomal subunit protein bL34c (46 aa).

It belongs to the bacterial ribosomal protein bL34 family.

It is found in the plastid. Its subcellular location is the chloroplast. The sequence is that of Large ribosomal subunit protein bL34c (rpl34) from Guillardia theta (Cryptophyte).